Reading from the N-terminus, the 58-residue chain is Small ribosomal subunit protein bS21 (58 aa).

The segment at 39 to 58 (EKPSVKRKRKSEVARKRKKF) is disordered. A compositionally biased stretch (basic residues) spans 43-58 (VKRKRKSEVARKRKKF).

It belongs to the bacterial ribosomal protein bS21 family.

The sequence is that of Small ribosomal subunit protein bS21 from Streptococcus pneumoniae (strain ATCC BAA-255 / R6).